A 527-amino-acid chain; its full sequence is Bifunctional purine biosynthesis protein PurH (527 aa).

Residues 8-156 (AGAKRPIRRA…KNHPSVAVVV (149 aa)) enclose the MGS-like domain.

It belongs to the PurH family.

The catalysed reaction is (6R)-10-formyltetrahydrofolate + 5-amino-1-(5-phospho-beta-D-ribosyl)imidazole-4-carboxamide = 5-formamido-1-(5-phospho-D-ribosyl)imidazole-4-carboxamide + (6S)-5,6,7,8-tetrahydrofolate. It catalyses the reaction IMP + H2O = 5-formamido-1-(5-phospho-D-ribosyl)imidazole-4-carboxamide. Its pathway is purine metabolism; IMP biosynthesis via de novo pathway; 5-formamido-1-(5-phospho-D-ribosyl)imidazole-4-carboxamide from 5-amino-1-(5-phospho-D-ribosyl)imidazole-4-carboxamide (10-formyl THF route): step 1/1. The protein operates within purine metabolism; IMP biosynthesis via de novo pathway; IMP from 5-formamido-1-(5-phospho-D-ribosyl)imidazole-4-carboxamide: step 1/1. This is Bifunctional purine biosynthesis protein PurH from Mycobacterium sp. (strain KMS).